The chain runs to 223 residues: UPF0441 protein YgiB (223 aa).

Residues 201–223 (ESVAKQSTMQRSAAGTSTRSMGG) form a disordered region. The span at 204 to 223 (AKQSTMQRSAAGTSTRSMGG) shows a compositional bias: polar residues.

It belongs to the UPF0441 family.

In Salmonella gallinarum (strain 287/91 / NCTC 13346), this protein is UPF0441 protein YgiB.